Reading from the N-terminus, the 96-residue chain is Large ribosomal subunit protein uL23 (96 aa).

It belongs to the universal ribosomal protein uL23 family. As to quaternary structure, part of the 50S ribosomal subunit. Contacts protein L29, and trigger factor when it is bound to the ribosome.

In terms of biological role, one of the early assembly proteins it binds 23S rRNA. One of the proteins that surrounds the polypeptide exit tunnel on the outside of the ribosome. Forms the main docking site for trigger factor binding to the ribosome. This is Large ribosomal subunit protein uL23 from Vesicomyosocius okutanii subsp. Calyptogena okutanii (strain HA).